Here is a 93-residue protein sequence, read N- to C-terminus: Translation initiation factor IF-1 (93 aa).

Residues 1–72 (MAKEELIQFE…EKGRLIFRHK (72 aa)) enclose the S1-like domain. Residues 70–93 (RHKDERPGGGPPRGAPPRGQFRRR) are disordered.

This sequence belongs to the IF-1 family. As to quaternary structure, component of the 30S ribosomal translation pre-initiation complex which assembles on the 30S ribosome in the order IF-2 and IF-3, IF-1 and N-formylmethionyl-tRNA(fMet); mRNA recruitment can occur at any time during PIC assembly.

The protein localises to the cytoplasm. Its function is as follows. One of the essential components for the initiation of protein synthesis. Stabilizes the binding of IF-2 and IF-3 on the 30S subunit to which N-formylmethionyl-tRNA(fMet) subsequently binds. Helps modulate mRNA selection, yielding the 30S pre-initiation complex (PIC). Upon addition of the 50S ribosomal subunit IF-1, IF-2 and IF-3 are released leaving the mature 70S translation initiation complex. In Rhodopseudomonas palustris (strain BisB18), this protein is Translation initiation factor IF-1.